The chain runs to 585 residues: Voltage-gated potassium channel KCNC1 (585 aa).

The Cytoplasmic segment spans residues 1-190 (MGQGDESERI…EDPYSSRYAR (190 aa)). The residue at position 44 (Ser-44) is a Phosphoserine. Zn(2+) contacts are provided by His-77, Cys-83, Cys-104, and Cys-105. Positions 121 to 147 (SFGGAPLDNSADDADADGPGDSGDGED) are disordered. Residues Ser-130, Ser-142, Ser-158, and Ser-160 each carry the phosphoserine modification. Acidic residues predominate over residues 130 to 147 (SADDADADGPGDSGDGED). The helical transmembrane segment at 191-209 (YVAFASLFFILVSITTFCL) threads the bilayer. 2 N-linked (GlcNAc...) asparagine glycosylation sites follow: Asn-220 and Asn-229. The helical transmembrane segment at 248 to 267 (IEGVCVVWFTFEFLMRVVFC) threads the bilayer. The Cytoplasmic segment spans residues 268 to 276 (PNKVEFIKN). A helical transmembrane segment spans residues 277-295 (SLNIIDFVAILPFYLEVGL). The helical; Voltage-sensor transmembrane segment at 309 to 331 (FLRVVRFVRILRIFKLTRHFVGL) threads the bilayer. At 332–344 (RVLGHTLRASTNE) the chain is on the cytoplasmic side. A helical membrane pass occupies residues 345-366 (FLLLIIFLALGVLIFATMIYYA). Residues Thr-400, Leu-401, Gly-402, and Tyr-403 each contribute to the K(+) site. Residues 400-405 (TLGYGD) carry the Selectivity filter motif. Residues 415–436 (LVGALCALAGVLTIAMPVPVIV) traverse the membrane as a helical segment. Residues 437 to 585 (NNFGMYYSLA…YMPTEAVRVT (149 aa)) are Cytoplasmic-facing. Ser-474 is modified (phosphoserine). Thr-483 is modified (phosphothreonine).

This sequence belongs to the potassium channel family. C (Shaw) (TC 1.A.1.2) subfamily. Kv3.1/KCNC1 sub-subfamily. As to quaternary structure, homotetramer. Homomultimer. Heteromultimer with KCNG3, KCNG4 and KCNV2. Heteromultimer with KCNC2. Heterotetramer with KCNC3. Interacts with the ancillary subunits KCNE1 and KCNE2; the interaction modulates channel activity. In terms of processing, N-glycosylated; contains sialylated glycans. Expressed in brain. Expressed in globus pallidal neurons of the basal ganglia (at protein level). Detected on Purkinje cells in the cerebellum molecular layer (at protein level).

The protein resides in the cell membrane. It localises to the cell projection. Its subcellular location is the axon. It is found in the presynaptic cell membrane. It catalyses the reaction K(+)(in) = K(+)(out). Voltage-gated potassium channel that opens in response to the voltage difference across the membrane and through which potassium ions pass in accordance with their electrochemical gradient. The mechanism is time-dependent and inactivation is slow. Plays an important role in the rapid repolarization of fast-firing brain neurons. Can form functional homotetrameric channels and heterotetrameric channels that contain variable proportions of KCNC2, and possibly other family members as well. Contributes to fire sustained trains of very brief action potentials at high frequency in pallidal neurons. The sequence is that of Voltage-gated potassium channel KCNC1 from Rattus norvegicus (Rat).